We begin with the raw amino-acid sequence, 736 residues long: Meiotic expression up-regulated protein 27 (736 aa).

Belongs to the UPF0300 family.

The protein is Meiotic expression up-regulated protein 27 (meu27) of Schizosaccharomyces pombe (strain 972 / ATCC 24843) (Fission yeast).